Here is a 279-residue protein sequence, read N- to C-terminus: Thymidylate synthase (279 aa).

Arg-21 is a binding site for dUMP. His-51 is a binding site for (6R)-5,10-methylene-5,6,7,8-tetrahydrofolate. 126-127 (RR) contributes to the dUMP binding site. The Nucleophile role is filled by Cys-159. DUMP is bound by residues 179-182 (RSAD), Asn-190, and 220-222 (HLY). Residue Asp-182 participates in (6R)-5,10-methylene-5,6,7,8-tetrahydrofolate binding. Position 278 (Ala-278) interacts with (6R)-5,10-methylene-5,6,7,8-tetrahydrofolate.

The protein belongs to the thymidylate synthase family. Bacterial-type ThyA subfamily. Homodimer.

Its subcellular location is the cytoplasm. The catalysed reaction is dUMP + (6R)-5,10-methylene-5,6,7,8-tetrahydrofolate = 7,8-dihydrofolate + dTMP. It participates in pyrimidine metabolism; dTTP biosynthesis. Functionally, catalyzes the reductive methylation of 2'-deoxyuridine-5'-monophosphate (dUMP) to 2'-deoxythymidine-5'-monophosphate (dTMP) while utilizing 5,10-methylenetetrahydrofolate (mTHF) as the methyl donor and reductant in the reaction, yielding dihydrofolate (DHF) as a by-product. This enzymatic reaction provides an intracellular de novo source of dTMP, an essential precursor for DNA biosynthesis. The polypeptide is Thymidylate synthase (Marinobacter nauticus (strain ATCC 700491 / DSM 11845 / VT8) (Marinobacter aquaeolei)).